Reading from the N-terminus, the 543-residue chain is Cyclohexanone 1,2-monooxygenase (543 aa).

FAD is bound by residues phenylalanine 16, aspartate 37, tryptophan 46, aspartate 57, tyrosine 63, and valine 110.

This sequence belongs to the FAD-binding monooxygenase family. Requires FAD as cofactor.

It catalyses the reaction cyclohexanone + NADPH + O2 + H(+) = hexano-6-lactone + NADP(+) + H2O. The chain is Cyclohexanone 1,2-monooxygenase from Acinetobacter sp.